Here is a 613-residue protein sequence, read N- to C-terminus: Dihydroxy-acid dehydratase (613 aa).

Asp81 is a binding site for Mg(2+). Cys122 contributes to the [2Fe-2S] cluster binding site. Residues Asp123 and Lys124 each coordinate Mg(2+). Lys124 bears the N6-carboxylysine mark. Residue Cys195 participates in [2Fe-2S] cluster binding. Position 491 (Glu491) interacts with Mg(2+). Residue Ser517 is the Proton acceptor of the active site.

This sequence belongs to the IlvD/Edd family. Homodimer. It depends on [2Fe-2S] cluster as a cofactor. Mg(2+) is required as a cofactor.

The enzyme catalyses (2R)-2,3-dihydroxy-3-methylbutanoate = 3-methyl-2-oxobutanoate + H2O. The catalysed reaction is (2R,3R)-2,3-dihydroxy-3-methylpentanoate = (S)-3-methyl-2-oxopentanoate + H2O. Its pathway is amino-acid biosynthesis; L-isoleucine biosynthesis; L-isoleucine from 2-oxobutanoate: step 3/4. The protein operates within amino-acid biosynthesis; L-valine biosynthesis; L-valine from pyruvate: step 3/4. Functionally, functions in the biosynthesis of branched-chain amino acids. Catalyzes the dehydration of (2R,3R)-2,3-dihydroxy-3-methylpentanoate (2,3-dihydroxy-3-methylvalerate) into 2-oxo-3-methylpentanoate (2-oxo-3-methylvalerate) and of (2R)-2,3-dihydroxy-3-methylbutanoate (2,3-dihydroxyisovalerate) into 2-oxo-3-methylbutanoate (2-oxoisovalerate), the penultimate precursor to L-isoleucine and L-valine, respectively. In Aeromonas hydrophila subsp. hydrophila (strain ATCC 7966 / DSM 30187 / BCRC 13018 / CCUG 14551 / JCM 1027 / KCTC 2358 / NCIMB 9240 / NCTC 8049), this protein is Dihydroxy-acid dehydratase.